The following is a 376-amino-acid chain: Phytanoyl-CoA hydroxylase interacting protein-like (376 aa).

Phosphoserine is present on residues serine 12 and serine 15. Asparagine 23 carries N-linked (GlcNAc...) asparagine glycosylation. Serine 25 bears the Phosphoserine mark. N-linked (GlcNAc...) asparagine glycosylation occurs at asparagine 37. In terms of domain architecture, Fibronectin type-III spans 52–161 (VPRNIKISNI…EIIEFCTADY (110 aa)).

The protein belongs to the PHYHIP family.

In terms of biological role, may play a role in the development of the central system. In Bos taurus (Bovine), this protein is Phytanoyl-CoA hydroxylase interacting protein-like (PHYHIPL).